Here is a 331-residue protein sequence, read N- to C-terminus: Junctional sarcoplasmic reticulum protein 1 (331 aa).

Disordered stretches follow at residues 1–118 and 157–331; these read MSMT…EELP and RVPE…KGRD. Residues 3 to 76 are mediates interaction with CACNA1S; the sequence is MTTRAWEELD…EKEPAARGTP (74 aa). 2 stretches are compositionally biased toward basic and acidic residues: residues 21–35 and 61–71; these read LEDH…EDRA and TRPKKMEKEPA. Pro residues-rich tracts occupy residues 103-112 and 161-175; these read PLQPPPPPPA and PWVP…PSSP. Basic and acidic residues-rich tracts occupy residues 222-242 and 250-302; these read AVRE…PRRE and PRKE…EPRK. Residues 320–331 show a composition bias toward basic residues; sequence SRQKLRAGKGRD.

In terms of assembly, interacts with CACNA1S, CACNB1 and calsequestrin.

It is found in the sarcoplasmic reticulum membrane. The protein localises to the endoplasmic reticulum membrane. Involved in skeletal muscle excitation/contraction coupling (EC), probably acting as a regulator of the voltage-sensitive calcium channel CACNA1S. EC is a physiological process whereby an electrical signal (depolarization of the plasma membrane) is converted into a chemical signal, a calcium gradient, by the opening of ryanodine receptor calcium release channels. May regulate CACNA1S membrane targeting and activity. The chain is Junctional sarcoplasmic reticulum protein 1 (JSRP1) from Homo sapiens (Human).